Here is a 117-residue protein sequence, read N- to C-terminus: Small ribosomal subunit protein uS19c (117 aa).

Belongs to the universal ribosomal protein uS19 family.

It localises to the plastid. Functionally, protein S19 forms a complex with S13 that binds strongly to the 16S ribosomal RNA. The sequence is that of Small ribosomal subunit protein uS19c (rps19) from Helicosporidium sp. subsp. Simulium jonesii (Green alga).